A 412-amino-acid polypeptide reads, in one-letter code: Argininosuccinate synthase (412 aa).

Residues 24–32 and Ala-50 each bind ATP; that span reads AFSGGLDTS. Residues Tyr-103 and Ser-108 each contribute to the L-citrulline site. Gly-132 is a binding site for ATP. L-aspartate-binding residues include Thr-134, Asn-138, and Asp-139. Residue Asn-138 participates in L-citrulline binding. Arg-142 contacts L-citrulline.

This sequence belongs to the argininosuccinate synthase family. Type 1 subfamily. As to quaternary structure, homotetramer.

Its subcellular location is the cytoplasm. It catalyses the reaction L-citrulline + L-aspartate + ATP = 2-(N(omega)-L-arginino)succinate + AMP + diphosphate + H(+). The protein operates within amino-acid biosynthesis; L-arginine biosynthesis; L-arginine from L-ornithine and carbamoyl phosphate: step 2/3. The sequence is that of Argininosuccinate synthase from Xanthomonas axonopodis pv. citri (strain 306).